We begin with the raw amino-acid sequence, 502 residues long: ATP synthase subunit alpha (502 aa).

169–176 contributes to the ATP binding site; sequence GDRQTGKT.

The protein belongs to the ATPase alpha/beta chains family. In terms of assembly, F-type ATPases have 2 components, CF(1) - the catalytic core - and CF(0) - the membrane proton channel. CF(1) has five subunits: alpha(3), beta(3), gamma(1), delta(1), epsilon(1). CF(0) has three main subunits: a(1), b(2) and c(9-12). The alpha and beta chains form an alternating ring which encloses part of the gamma chain. CF(1) is attached to CF(0) by a central stalk formed by the gamma and epsilon chains, while a peripheral stalk is formed by the delta and b chains.

The protein localises to the cell membrane. The enzyme catalyses ATP + H2O + 4 H(+)(in) = ADP + phosphate + 5 H(+)(out). In terms of biological role, produces ATP from ADP in the presence of a proton gradient across the membrane. The alpha chain is a regulatory subunit. The polypeptide is ATP synthase subunit alpha (Priestia megaterium (strain ATCC 12872 / QMB1551) (Bacillus megaterium)).